Here is a 173-residue protein sequence, read N- to C-terminus: Probable DNA-directed RNA polymerase subunit delta (173 aa).

Residues 14-81 form the HTH HARE-type domain; sequence LSMIELGVKI…GSGMWGLKRW (68 aa). The segment at 86-173 is disordered; it reads QAEEEITEEP…EDENDDDNTR (88 aa). Positions 109-173 are enriched in acidic residues; that stretch reads IDDVDDDLDV…EDENDDDNTR (65 aa).

Belongs to the RpoE family. As to quaternary structure, RNAP is composed of a core of 2 alpha, a beta and a beta' subunits. The core is associated with a delta subunit and one of several sigma factors.

Its function is as follows. Participates in both the initiation and recycling phases of transcription. In the presence of the delta subunit, RNAP displays an increased specificity of transcription, a decreased affinity for nucleic acids, and an increased efficiency of RNA synthesis because of enhanced recycling. This Oceanobacillus iheyensis (strain DSM 14371 / CIP 107618 / JCM 11309 / KCTC 3954 / HTE831) protein is Probable DNA-directed RNA polymerase subunit delta.